The chain runs to 808 residues: Probable E3 ubiquitin-protein ligase MARCHF10 (808 aa).

3 disordered regions span residues 33-81 (LRRQ…LTEP), 101-268 (QTSV…RKAS), and 284-415 (SRRE…EVGV). Over residues 34 to 49 (RRQEYRRDPNEKKRDQ) the composition is skewed to basic and acidic residues. A compositionally biased stretch (polar residues) spans 237–249 (QAFQGKNSPQVLS). Basic and acidic residues-rich tracts occupy residues 330–349 (KNFE…RSEP) and 379–397 (LPDR…ENAK). The segment at 651-721 (DSEEEGDLCR…EMCKQGLLVD (71 aa)) adopts an RING-CH-type zinc-finger fold. Residues Cys-659, Cys-662, Cys-677, Cys-679, His-687, Cys-690, Cys-711, and Cys-714 each contribute to the Zn(2+) site. The tract at residues 773–808 (ERERLSRNYPQPRTEENENSELGDGNEGSISQSQVV) is disordered.

It catalyses the reaction S-ubiquitinyl-[E2 ubiquitin-conjugating enzyme]-L-cysteine + [acceptor protein]-L-lysine = [E2 ubiquitin-conjugating enzyme]-L-cysteine + N(6)-ubiquitinyl-[acceptor protein]-L-lysine.. Its pathway is protein modification; protein ubiquitination. E3 ubiquitin-protein ligase. E3 ubiquitin ligases accept ubiquitin from an E2 ubiquitin-conjugating enzyme in the form of a thioester and then directly transfer the ubiquitin to targeted substrates. This is Probable E3 ubiquitin-protein ligase MARCHF10 from Homo sapiens (Human).